The sequence spans 113 residues: uncharacterized protein (113 aa).

A helical transmembrane segment spans residues 7–29 (FFILIVLLFTVFSLKEFIPNTFC).

The protein resides in the membrane. This is an uncharacterized protein from Aquifex aeolicus (strain VF5).